The following is a 265-amino-acid chain: Ubiquinone biosynthesis protein COQ4 homolog, mitochondrial (265 aa).

The transit peptide at 1-30 (MMQRSWQSWRRGLTLGLASRRSYVASVEAP) directs the protein to the mitochondrion. Zn(2+) contacts are provided by H170, D171, H174, and E186.

This sequence belongs to the COQ4 family. In terms of assembly, component of a multi-subunit COQ enzyme complex. Zn(2+) serves as cofactor.

The protein localises to the mitochondrion inner membrane. It carries out the reaction a 4-hydroxy-3-methoxy-5-(all-trans-polyprenyl)benzoate + H(+) = a 2-methoxy-6-(all-trans-polyprenyl)phenol + CO2. It functions in the pathway cofactor biosynthesis; ubiquinone biosynthesis. Functionally, lyase that catalyzes the C1-decarboxylation of 4-hydroxy-3-methoxy-5-(all-trans-polyprenyl)benzoic acid into 2-methoxy-6-(all-trans-polyprenyl)phenol during ubiquinone biosynthesis. The polypeptide is Ubiquinone biosynthesis protein COQ4 homolog, mitochondrial (Drosophila virilis (Fruit fly)).